The following is a 331-amino-acid chain: Adenosine deaminase (331 aa).

Positions 12 and 14 each coordinate Zn(2+). Substrate is bound by residues His-14, Asp-16, and Gly-170. A Zn(2+)-binding site is contributed by His-197. The active-site Proton donor is the Glu-200. Position 278 (Asp-278) interacts with Zn(2+).

It belongs to the metallo-dependent hydrolases superfamily. Adenosine and AMP deaminases family. Adenosine deaminase subfamily. The cofactor is Zn(2+).

The catalysed reaction is adenosine + H2O + H(+) = inosine + NH4(+). It catalyses the reaction 2'-deoxyadenosine + H2O + H(+) = 2'-deoxyinosine + NH4(+). In terms of biological role, catalyzes the hydrolytic deamination of adenosine and 2-deoxyadenosine. The protein is Adenosine deaminase of Shewanella woodyi (strain ATCC 51908 / MS32).